The chain runs to 942 residues: Valine--tRNA ligase (942 aa).

The 'HIGH' region signature appears at 43 to 53 (PNVTGTLHMGH). The 'KMSKS' region signature appears at 551 to 555 (KMSKS). Lys-554 lines the ATP pocket. Residues 876–942 (EGLVDLDAER…AGLREQRAKL (67 aa)) adopt a coiled-coil conformation.

The protein belongs to the class-I aminoacyl-tRNA synthetase family. ValS type 1 subfamily. In terms of assembly, monomer.

It localises to the cytoplasm. It catalyses the reaction tRNA(Val) + L-valine + ATP = L-valyl-tRNA(Val) + AMP + diphosphate. Catalyzes the attachment of valine to tRNA(Val). As ValRS can inadvertently accommodate and process structurally similar amino acids such as threonine, to avoid such errors, it has a 'posttransfer' editing activity that hydrolyzes mischarged Thr-tRNA(Val) in a tRNA-dependent manner. This is Valine--tRNA ligase from Stenotrophomonas maltophilia (strain R551-3).